Consider the following 81-residue polypeptide: Conotoxin Vc6.13 (81 aa).

An N-terminal signal peptide occupies residues 1–19; sequence MEKLTILLLVAAVLMSIQA. Residues 20–44 constitute a propeptide that is removed on maturation; the sequence is LNQEQHQRAKINLLSKRKAPAERWW. Disulfide bonds link Cys49–Cys63, Cys56–Cys67, and Cys62–Cys72.

This sequence belongs to the conotoxin O2 superfamily. As to expression, expressed by the venom duct.

Its subcellular location is the secreted. Functionally, inhibits voltage-gated ion channels. In Conus victoriae (Queen Victoria cone), this protein is Conotoxin Vc6.13.